Reading from the N-terminus, the 602-residue chain is Elongation factor 4 (602 aa).

One can recognise a tr-type G domain in the interval 7–189 (SRIRNFCIIA…AVVDRVPAPA (183 aa)). Residues 19–24 (DHGKST) and 136–139 (NKID) contribute to the GTP site.

It belongs to the TRAFAC class translation factor GTPase superfamily. Classic translation factor GTPase family. LepA subfamily.

Its subcellular location is the cell inner membrane. It catalyses the reaction GTP + H2O = GDP + phosphate + H(+). Functionally, required for accurate and efficient protein synthesis under certain stress conditions. May act as a fidelity factor of the translation reaction, by catalyzing a one-codon backward translocation of tRNAs on improperly translocated ribosomes. Back-translocation proceeds from a post-translocation (POST) complex to a pre-translocation (PRE) complex, thus giving elongation factor G a second chance to translocate the tRNAs correctly. Binds to ribosomes in a GTP-dependent manner. This is Elongation factor 4 from Synechococcus sp. (strain CC9902).